The primary structure comprises 106 residues: Large ribosomal subunit protein bL21 (106 aa).

It belongs to the bacterial ribosomal protein bL21 family. Part of the 50S ribosomal subunit. Contacts protein L20.

This protein binds to 23S rRNA in the presence of protein L20. This chain is Large ribosomal subunit protein bL21, found in Chlamydia caviae (strain ATCC VR-813 / DSM 19441 / 03DC25 / GPIC) (Chlamydophila caviae).